We begin with the raw amino-acid sequence, 446 residues long: Glutamyl-tRNA reductase (446 aa).

Residues 49–52, S109, 114–116, and Q120 each bind substrate; these read TCNR and ETQ. Catalysis depends on C50, which acts as the Nucleophile. 189–194 contacts NADP(+); the sequence is GAGKMG.

Belongs to the glutamyl-tRNA reductase family. As to quaternary structure, homodimer.

It catalyses the reaction (S)-4-amino-5-oxopentanoate + tRNA(Glu) + NADP(+) = L-glutamyl-tRNA(Glu) + NADPH + H(+). The protein operates within porphyrin-containing compound metabolism; protoporphyrin-IX biosynthesis; 5-aminolevulinate from L-glutamyl-tRNA(Glu): step 1/2. Catalyzes the NADPH-dependent reduction of glutamyl-tRNA(Glu) to glutamate 1-semialdehyde (GSA). The polypeptide is Glutamyl-tRNA reductase (Priestia megaterium (Bacillus megaterium)).